The following is a 1169-amino-acid chain: Topoisomerase 1-associated factor 1 (1169 aa).

Disordered stretches follow at residues 573 to 600 and 900 to 1150; these read RRKA…DRLE and YGGG…DAPI. Acidic residues-rich tracts occupy residues 583–599 and 917–928; these read GNDE…EDRL and FGDDSEGEDEVP. Over residues 931-940 the composition is skewed to pro residues; it reads PLFPPNPRAA. The span at 958–972 shows a compositional bias: acidic residues; sequence PDDEDEDDSVDEETL. 2 stretches are compositionally biased toward basic and acidic residues: residues 973-1000 and 1009-1024; these read EERR…HASD and KEFF…EQAK. Residues 1100–1112 show a composition bias toward acidic residues; sequence GEEDDGFNFDDDL. The span at 1113-1140 shows a compositional bias: basic and acidic residues; the sequence is VFSRDREKLLGSAGNEEKDSNRPDKAMA.

Belongs to the timeless family.

Its subcellular location is the nucleus. Its function is as follows. Involved in chromosome segregation during meiosis and DNA damage repair. This Aspergillus niger (strain ATCC MYA-4892 / CBS 513.88 / FGSC A1513) protein is Topoisomerase 1-associated factor 1 (tof1).